Reading from the N-terminus, the 201-residue chain is Histidine biosynthesis bifunctional protein HisIE (201 aa).

The interval 1–114 (MLTAQQIEKL…FAPAQTEWGF (114 aa)) is phosphoribosyl-AMP cyclohydrolase. Residues 115–201 (LYQLEKLLAS…SCVIRRLRER (87 aa)) form a phosphoribosyl-ATP pyrophosphohydrolase region.

In the N-terminal section; belongs to the PRA-CH family. This sequence in the C-terminal section; belongs to the PRA-PH family.

It localises to the cytoplasm. The enzyme catalyses 1-(5-phospho-beta-D-ribosyl)-ATP + H2O = 1-(5-phospho-beta-D-ribosyl)-5'-AMP + diphosphate + H(+). It catalyses the reaction 1-(5-phospho-beta-D-ribosyl)-5'-AMP + H2O = 1-(5-phospho-beta-D-ribosyl)-5-[(5-phospho-beta-D-ribosylamino)methylideneamino]imidazole-4-carboxamide. It functions in the pathway amino-acid biosynthesis; L-histidine biosynthesis; L-histidine from 5-phospho-alpha-D-ribose 1-diphosphate: step 2/9. It participates in amino-acid biosynthesis; L-histidine biosynthesis; L-histidine from 5-phospho-alpha-D-ribose 1-diphosphate: step 3/9. The protein is Histidine biosynthesis bifunctional protein HisIE of Photorhabdus laumondii subsp. laumondii (strain DSM 15139 / CIP 105565 / TT01) (Photorhabdus luminescens subsp. laumondii).